We begin with the raw amino-acid sequence, 288 residues long: Acetyl-coenzyme A carboxylase carboxyl transferase subunit beta (288 aa).

The CoA carboxyltransferase N-terminal domain occupies 34–288 (LFAKCPACKH…HLVAFHGGGQ (255 aa)). C38, C41, C56, and C59 together coordinate Zn(2+). Residues 38–59 (CPACKHMIYKKDLGLAKICPTC) form a C4-type zinc finger.

This sequence belongs to the AccD/PCCB family. Acetyl-CoA carboxylase is a heterohexamer composed of biotin carboxyl carrier protein (AccB), biotin carboxylase (AccC) and two subunits each of ACCase subunit alpha (AccA) and ACCase subunit beta (AccD). Zn(2+) is required as a cofactor.

The protein localises to the cytoplasm. The enzyme catalyses N(6)-carboxybiotinyl-L-lysyl-[protein] + acetyl-CoA = N(6)-biotinyl-L-lysyl-[protein] + malonyl-CoA. It functions in the pathway lipid metabolism; malonyl-CoA biosynthesis; malonyl-CoA from acetyl-CoA: step 1/1. Component of the acetyl coenzyme A carboxylase (ACC) complex. Biotin carboxylase (BC) catalyzes the carboxylation of biotin on its carrier protein (BCCP) and then the CO(2) group is transferred by the transcarboxylase to acetyl-CoA to form malonyl-CoA. This is Acetyl-coenzyme A carboxylase carboxyl transferase subunit beta from Streptococcus pyogenes serotype M3 (strain ATCC BAA-595 / MGAS315).